Here is a 133-residue protein sequence, read N- to C-terminus: NADPH-dependent 7-cyano-7-deazaguanine reductase (133 aa).

C49 (thioimide intermediate) is an active-site residue. D56 serves as the catalytic Proton donor. Residues 71–73 (IEL) and 90–91 (HE) each bind substrate.

This sequence belongs to the GTP cyclohydrolase I family. QueF type 1 subfamily.

The protein resides in the cytoplasm. It carries out the reaction 7-aminomethyl-7-carbaguanine + 2 NADP(+) = 7-cyano-7-deazaguanine + 2 NADPH + 3 H(+). Its pathway is tRNA modification; tRNA-queuosine biosynthesis. Its function is as follows. Catalyzes the NADPH-dependent reduction of 7-cyano-7-deazaguanine (preQ0) to 7-aminomethyl-7-deazaguanine (preQ1). This chain is NADPH-dependent 7-cyano-7-deazaguanine reductase, found in Leptospira interrogans serogroup Icterohaemorrhagiae serovar copenhageni (strain Fiocruz L1-130).